Consider the following 428-residue polypeptide: Adenylosuccinate synthetase (428 aa).

GTP contacts are provided by residues Gly-12–Lys-18 and Gly-40–Thr-42. The active-site Proton acceptor is Asp-13. The Mg(2+) site is built by Asp-13 and Gly-40. IMP-binding positions include Asp-13 to Lys-16, Asn-38 to His-41, Thr-128, Arg-142, Gln-223, Thr-238, and Arg-302. His-41 acts as the Proton donor in catalysis. Substrate is bound at residue Val-298–Arg-304. GTP is bound by residues Arg-304, Lys-330–Asp-332, and Gly-413–Gly-415.

The protein belongs to the adenylosuccinate synthetase family. As to quaternary structure, homodimer. Mg(2+) serves as cofactor.

Its subcellular location is the cytoplasm. The enzyme catalyses IMP + L-aspartate + GTP = N(6)-(1,2-dicarboxyethyl)-AMP + GDP + phosphate + 2 H(+). The protein operates within purine metabolism; AMP biosynthesis via de novo pathway; AMP from IMP: step 1/2. Plays an important role in the de novo pathway of purine nucleotide biosynthesis. Catalyzes the first committed step in the biosynthesis of AMP from IMP. In Acidothermus cellulolyticus (strain ATCC 43068 / DSM 8971 / 11B), this protein is Adenylosuccinate synthetase.